A 1066-amino-acid polypeptide reads, in one-letter code: Probable sucrose-phosphate synthase 4 (1066 aa).

Disordered regions lie at residues 132-166 (YAAADMSEDLSEGEKGENINESSSTHDESTRGRMP) and 688-714 (PRHPRWQKSDDATEVSEADSPGDSLRD). Over residues 143–162 (EGEKGENINESSSTHDESTR) the composition is skewed to basic and acidic residues.

It belongs to the glycosyltransferase 1 family. As to quaternary structure, homodimer or homotetramer. In terms of tissue distribution, expressed in germinating seeds.

The catalysed reaction is beta-D-fructose 6-phosphate + UDP-alpha-D-glucose = sucrose 6(F)-phosphate + UDP + H(+). It participates in glycan biosynthesis; sucrose biosynthesis; sucrose from D-fructose 6-phosphate and UDP-alpha-D-glucose: step 1/2. Activity is regulated by phosphorylation and moderated by concentration of metabolites and light. Functionally, plays a role in photosynthetic sucrose synthesis by catalyzing the rate-limiting step of sucrose biosynthesis from UDP-glucose and fructose- 6-phosphate. Involved in the regulation of carbon partitioning in the leaves of plants. May regulate the synthesis of sucrose and therefore play a major role as a limiting factor in the export of photoassimilates out of the leaf. Plays a role for sucrose availability that is essential for plant growth and fiber elongation. The chain is Probable sucrose-phosphate synthase 4 (SPS4) from Oryza sativa subsp. japonica (Rice).